A 141-amino-acid polypeptide reads, in one-letter code: Aspartate 1-decarboxylase (141 aa).

Ser25 acts as the Schiff-base intermediate with substrate; via pyruvic acid in catalysis. A Pyruvic acid (Ser) modification is found at Ser25. Position 57 (Thr57) interacts with substrate. The active-site Proton donor is the Tyr58. 73-75 (GAA) is a binding site for substrate. A disordered region spans residues 121–141 (ASAPVPGSRTERSPQAVVAGG).

It belongs to the PanD family. As to quaternary structure, heterooctamer of four alpha and four beta subunits. Pyruvate serves as cofactor. Post-translationally, is synthesized initially as an inactive proenzyme, which is activated by self-cleavage at a specific serine bond to produce a beta-subunit with a hydroxyl group at its C-terminus and an alpha-subunit with a pyruvoyl group at its N-terminus.

It is found in the cytoplasm. It carries out the reaction L-aspartate + H(+) = beta-alanine + CO2. The protein operates within cofactor biosynthesis; (R)-pantothenate biosynthesis; beta-alanine from L-aspartate: step 1/1. In terms of biological role, catalyzes the pyruvoyl-dependent decarboxylation of aspartate to produce beta-alanine. This Streptomyces griseus subsp. griseus (strain JCM 4626 / CBS 651.72 / NBRC 13350 / KCC S-0626 / ISP 5235) protein is Aspartate 1-decarboxylase.